The primary structure comprises 312 residues: MKSLKVALIGSGAVGTSFLYAAMSRGLASEYMVIDINEKSQVGNVFDLQDAVPSSPQYSKVIAGDYKQLKDYDFIFIGAGRPQKQGGETRLQLLEGNVEIMKNIAKAVKESGFKGITLIASNPVDIMAYTYLKVTGFEPNKVIGSGTLLDSARLKFAIAEKYGMSSRDVQAYVLGEHGDSSVSIISSAKIAGLPLKHFSKASDIEKEFAEIDHFIRRRAYEIIERKGATFYGIGEATAEVAELILRDTKEVRVVASLINGQYGAKDVMFGTPCVLGRNGVEKILEIELSATEKAGLDKSIQVLKDNIKLAKL.

Residues Val-14, Asp-35, and Tyr-66 each contribute to the NAD(+) site. Substrate-binding positions include Gln-83, Arg-90, and 122-125; that span reads NPVD. Residues 120-122 and Ser-145 contribute to the NAD(+) site; that span reads ASN. 150-153 lines the substrate pocket; it reads DSAR. His-177 (proton acceptor) is an active-site residue. Tyr-220 is modified (phosphotyrosine). A substrate-binding site is contributed by Thr-229.

The protein belongs to the LDH/MDH superfamily. LDH family. Homotetramer.

Its subcellular location is the cytoplasm. The enzyme catalyses (S)-lactate + NAD(+) = pyruvate + NADH + H(+). The protein operates within fermentation; pyruvate fermentation to lactate; (S)-lactate from pyruvate: step 1/1. Functionally, catalyzes the conversion of lactate to pyruvate. In Mycoplasma pneumoniae (strain ATCC 29342 / M129 / Subtype 1) (Mycoplasmoides pneumoniae), this protein is L-lactate dehydrogenase.